Here is a 467-residue protein sequence, read N- to C-terminus: Congo red hypersensitive protein 2 (467 aa).

Residues 1-23 (MAIVNSWLICLVSIFSFVVRVEA) form the signal peptide. Residue Asn28 is glycosylated (N-linked (GlcNAc...) asparagine). Cys56 and Cys67 are oxidised to a cystine. The GH16 domain occupies 63–280 (SHDSCMPVPI…WSGGEINWDA (218 aa)). Residue Asn96 is glycosylated (N-linked (GlcNAc...) asparagine). The Nucleophile role is filled by Glu166. Glu170 acts as the Proton donor in catalysis. Glu170 serves as a coordination point for chitin. N-linked (GlcNAc...) asparagine glycans are attached at residues Asn190, Asn196, Asn233, and Asn237. Residue Trp257 participates in chitin binding. N-linked (GlcNAc...) asparagine glycosylation is present at Asn261. Thr268 lines the chitin pocket. 2 N-linked (GlcNAc...) asparagine glycosylation sites follow: Asn297 and Asn310. The tract at residues 337-444 (MDSDEGSGLD…SSSTSSMSGN (108 aa)) is disordered. Positions 351-444 (ATTSSTQKSS…SSSTSSMSGN (94 aa)) are enriched in low complexity. Asn445 is lipidated: GPI-anchor amidated asparagine. Positions 446 to 467 (AGANVAANWRLTVLCVILGYVL) are cleaved as a propeptide — removed in mature form.

The protein belongs to the glycosyl hydrolase 16 family. CRH1 subfamily. The GPI-anchor is attached to the protein in the endoplasmic reticulum and serves to target the protein to the cell surface. There, the glucosamine-inositol phospholipid moiety is cleaved off and the GPI-modified mannoprotein is covalently attached via its lipidless GPI glycan remnant to the 1,6-beta-glucan of the outer cell wall layer.

It is found in the secreted. Its subcellular location is the cell wall. The protein localises to the membrane. It catalyses the reaction Random endo-hydrolysis of N-acetyl-beta-D-glucosaminide (1-&gt;4)-beta-linkages in chitin and chitodextrins.. In terms of biological role, dual chitinase/transglycosylase that plays a role in cell wall architecture. Chitinase and transglycosylase activities are coupled. Required for the polysaccharide cross-linking at the septa and the cell wall. More specifically, transfers chitin to both beta(1-3)- and beta(1-6)glucan in the cell wall. The minimal number of intact hexopyranose units required in the molecule of the acceptor oligosaccharide is two and the effectivity of the acceptor increased with the increasing length of its oligosaccharide chain. The sequence is that of Congo red hypersensitive protein 2 from Saccharomyces cerevisiae (strain ATCC 204508 / S288c) (Baker's yeast).